Consider the following 425-residue polypeptide: MIDIKLIRQNPDFVKEALRKRGEDPAVIDEILKIDADWRATITKTNELRSRRNEISKNVARLKKEGKNAEAEALIEEGKRLGEEIKALEEKEKELQEKLNYLLLMVPNIPHESVPVGEDESQNVEVRRWGEPREFDFTPLAHWDLGPAWGLMDFSRASKLSGSRFTVMYGKLARLERALINFMLDVHTKEHGYTEVWVPHLVKRETITITGQLPKFEEELYLAERDDLFLIPTAEVPLAALHSGEILEEKELPKKYVAYTPCYRREAGSYGKDVRGMIRQHQFDKVELVWVTTPKRSFEDLEQLVKDAETILQKLELPYRVVSLCTGDLGFTSAKTYDIEVWLPSYNAYKEISSCSNVTDFQARRGNMRYRRRSDGKLEYVHTLNGSGIAVGRALVAILENYQQPDGSVRVPEVLVPYTGFEVIP.

Position 233–235 (233–235 (TAE)) interacts with L-serine. 264 to 266 (RRE) provides a ligand contact to ATP. Glu287 contacts L-serine. Residue 351 to 354 (EISS) participates in ATP binding. Ser387 serves as a coordination point for L-serine.

This sequence belongs to the class-II aminoacyl-tRNA synthetase family. Type-1 seryl-tRNA synthetase subfamily. Homodimer. The tRNA molecule binds across the dimer.

The protein resides in the cytoplasm. The enzyme catalyses tRNA(Ser) + L-serine + ATP = L-seryl-tRNA(Ser) + AMP + diphosphate + H(+). It carries out the reaction tRNA(Sec) + L-serine + ATP = L-seryl-tRNA(Sec) + AMP + diphosphate + H(+). It participates in aminoacyl-tRNA biosynthesis; selenocysteinyl-tRNA(Sec) biosynthesis; L-seryl-tRNA(Sec) from L-serine and tRNA(Sec): step 1/1. Its function is as follows. Catalyzes the attachment of serine to tRNA(Ser). Is also able to aminoacylate tRNA(Sec) with serine, to form the misacylated tRNA L-seryl-tRNA(Sec), which will be further converted into selenocysteinyl-tRNA(Sec). The protein is Serine--tRNA ligase of Thermotoga sp. (strain RQ2).